The sequence spans 204 residues: 34 kDa membrane antigen (204 aa).

The signal sequence occupies residues Met1–Ala19. The N-palmitoyl cysteine moiety is linked to residue Cys20. Residue Cys20 is the site of S-diacylglycerol cysteine attachment.

The protein belongs to the UPF0423 family.

The protein resides in the cell membrane. This antigen is a pathogen-specific membrane immunogen. This chain is 34 kDa membrane antigen (tpd), found in Treponema pallidum (strain Nichols).